We begin with the raw amino-acid sequence, 293 residues long: Bifunctional protein FolD (293 aa).

NADP(+) contacts are provided by residues G165–S167, S190, and I231.

The protein belongs to the tetrahydrofolate dehydrogenase/cyclohydrolase family. In terms of assembly, homodimer.

The enzyme catalyses (6R)-5,10-methylene-5,6,7,8-tetrahydrofolate + NADP(+) = (6R)-5,10-methenyltetrahydrofolate + NADPH. It catalyses the reaction (6R)-5,10-methenyltetrahydrofolate + H2O = (6R)-10-formyltetrahydrofolate + H(+). The protein operates within one-carbon metabolism; tetrahydrofolate interconversion. Its function is as follows. Catalyzes the oxidation of 5,10-methylenetetrahydrofolate to 5,10-methenyltetrahydrofolate and then the hydrolysis of 5,10-methenyltetrahydrofolate to 10-formyltetrahydrofolate. This Synechococcus sp. (strain WH7803) protein is Bifunctional protein FolD.